Consider the following 158-residue polypeptide: Low molecular weight phosphotyrosine protein phosphatase (158 aa).

At A2 the chain carries N-acetylalanine. Catalysis depends on C13, which acts as the Nucleophile. R19 is an active-site residue. D130 serves as the catalytic Proton donor. A phosphotyrosine mark is found at Y132 and Y133.

The protein belongs to the low molecular weight phosphotyrosine protein phosphatase family. In terms of assembly, interacts with EPHA2; dephosphorylates EPHA2. Interacts with EPHB1. As to quaternary structure, interacts with the SH3 domain of SPTAN1. There is no interaction observed for isoform 2. Phosphorylated by LCK. Phosphorylation at Tyr-132 increases its phosphatase activity.

The protein resides in the cytoplasm. It catalyses the reaction O-phospho-L-tyrosyl-[protein] + H2O = L-tyrosyl-[protein] + phosphate. The catalysed reaction is a phosphate monoester + H2O = an alcohol + phosphate. Inhibited by sulfhydryl reagents. Its function is as follows. Acts on tyrosine phosphorylated proteins, low-MW aryl phosphates and natural and synthetic acyl phosphates with differences in substrate specificity between isoform 1 and isoform 2. This chain is Low molecular weight phosphotyrosine protein phosphatase, found in Rattus norvegicus (Rat).